Here is a 376-residue protein sequence, read N- to C-terminus: UDP-N-acetylglucosamine--N-acetylmuramyl-(pentapeptide) pyrophosphoryl-undecaprenol N-acetylglucosamine transferase (376 aa).

UDP-N-acetyl-alpha-D-glucosamine is bound by residues 11-13, Asn-117, Arg-160, Ser-208, and Gln-310; that span reads TGG.

The protein belongs to the glycosyltransferase 28 family. MurG subfamily.

It is found in the cell inner membrane. It catalyses the reaction di-trans,octa-cis-undecaprenyl diphospho-N-acetyl-alpha-D-muramoyl-L-alanyl-D-glutamyl-meso-2,6-diaminopimeloyl-D-alanyl-D-alanine + UDP-N-acetyl-alpha-D-glucosamine = di-trans,octa-cis-undecaprenyl diphospho-[N-acetyl-alpha-D-glucosaminyl-(1-&gt;4)]-N-acetyl-alpha-D-muramoyl-L-alanyl-D-glutamyl-meso-2,6-diaminopimeloyl-D-alanyl-D-alanine + UDP + H(+). The protein operates within cell wall biogenesis; peptidoglycan biosynthesis. Its function is as follows. Cell wall formation. Catalyzes the transfer of a GlcNAc subunit on undecaprenyl-pyrophosphoryl-MurNAc-pentapeptide (lipid intermediate I) to form undecaprenyl-pyrophosphoryl-MurNAc-(pentapeptide)GlcNAc (lipid intermediate II). The sequence is that of UDP-N-acetylglucosamine--N-acetylmuramyl-(pentapeptide) pyrophosphoryl-undecaprenol N-acetylglucosamine transferase from Rickettsia africae (strain ESF-5).